The following is a 155-amino-acid chain: uncharacterized protein (155 aa).

The signal sequence occupies residues 1–30 (MTYNTNTSLSSYAGLSAFALSVFCILWGTA).

This is an uncharacterized protein from Treponema pallidum (strain Nichols).